Consider the following 465-residue polypeptide: UDP-N-acetylmuramate--L-alanine ligase (465 aa).

Residue 112-118 participates in ATP binding; the sequence is GTHGKTT.

Belongs to the MurCDEF family.

It localises to the cytoplasm. The catalysed reaction is UDP-N-acetyl-alpha-D-muramate + L-alanine + ATP = UDP-N-acetyl-alpha-D-muramoyl-L-alanine + ADP + phosphate + H(+). It functions in the pathway cell wall biogenesis; peptidoglycan biosynthesis. Its function is as follows. Cell wall formation. In Burkholderia ambifaria (strain ATCC BAA-244 / DSM 16087 / CCUG 44356 / LMG 19182 / AMMD) (Burkholderia cepacia (strain AMMD)), this protein is UDP-N-acetylmuramate--L-alanine ligase.